Reading from the N-terminus, the 101-residue chain is Small ribosomal subunit protein uS14 (101 aa).

The tract at residues 50–70 (SLPRDSSPSRQRKRCRQTGRP) is disordered. Over residues 59 to 68 (RQRKRCRQTG) the composition is skewed to basic residues.

Belongs to the universal ribosomal protein uS14 family. Part of the 30S ribosomal subunit. Contacts proteins S3 and S10.

Binds 16S rRNA, required for the assembly of 30S particles and may also be responsible for determining the conformation of the 16S rRNA at the A site. In Erwinia tasmaniensis (strain DSM 17950 / CFBP 7177 / CIP 109463 / NCPPB 4357 / Et1/99), this protein is Small ribosomal subunit protein uS14.